Consider the following 439-residue polypeptide: D-inositol 3-phosphate glycosyltransferase (439 aa).

His-21 contacts 1D-myo-inositol 3-phosphate. UDP-N-acetyl-alpha-D-glucosamine is bound by residues 27 to 28 (QP) and Gly-35. 1D-myo-inositol 3-phosphate contacts are provided by residues 32 to 37 (DAGGMN), Lys-90, Tyr-123, Thr-147, and Arg-167. UDP-N-acetyl-alpha-D-glucosamine is bound by residues Arg-241, Lys-246, and Gln-299. Mg(2+) is bound by residues Tyr-308, Arg-309, and Ala-311. 2 residues coordinate UDP-N-acetyl-alpha-D-glucosamine: Glu-321 and Glu-329. Thr-335 is a Mg(2+) binding site.

It belongs to the glycosyltransferase group 1 family. MshA subfamily. As to quaternary structure, homodimer.

It catalyses the reaction 1D-myo-inositol 3-phosphate + UDP-N-acetyl-alpha-D-glucosamine = 1D-myo-inositol 2-acetamido-2-deoxy-alpha-D-glucopyranoside 3-phosphate + UDP + H(+). Functionally, catalyzes the transfer of a N-acetyl-glucosamine moiety to 1D-myo-inositol 3-phosphate to produce 1D-myo-inositol 2-acetamido-2-deoxy-glucopyranoside 3-phosphate in the mycothiol biosynthesis pathway. This chain is D-inositol 3-phosphate glycosyltransferase, found in Mycobacterium sp. (strain KMS).